Reading from the N-terminus, the 133-residue chain is Histone H2A (133 aa).

Residues 1-10 (MTGGKSGGKA) show a composition bias toward gly residues. Residues 1-25 (MTGGKSGGKASGSKSSQSRSSKAGL) form a disordered region. Residues Lys-5 and Lys-9 each carry the N6-acetyllysine modification. A compositionally biased stretch (low complexity) spans 11 to 24 (SGSKSSQSRSSKAG). Position 106 is an N5-methylglutamine (Gln-106). Ser-130 carries the phosphoserine modification. A [ST]-Q motif motif is present at residues 130 to 131 (SQ).

Belongs to the histone H2A family. As to quaternary structure, the nucleosome is a histone octamer containing two molecules each of H2A, H2B, H3 and H4 assembled in one H3-H4 heterotetramer and two H2A-H2B heterodimers. The octamer wraps approximately 147 bp of DNA. Post-translationally, phosphorylated to form H2AS128ph (gamma-H2A) in response to DNA double-strand breaks (DSBs) generated by exogenous genotoxic agents and by stalled replication forks. Phosphorylation is dependent on the DNA damage checkpoint kinases MEC1/ATR and TEL1/ATM, spreads on either side of a detected DSB site and may mark the surrounding chromatin for recruitment of proteins required for DNA damage signaling and repair. Gamma-H2A is removed from the DNA prior to the strand invasion-primer extension step of the repair process and subsequently dephosphorylated. Dephosphorylation is necessary for efficient recovery from the DNA damage checkpoint. In terms of processing, acetylated by ESA1 to form H2AK4ac and H2AK7ac.

Its subcellular location is the nucleus. The protein localises to the chromosome. In terms of biological role, core component of nucleosome which plays a central role in DNA double strand break (DSB) repair. Nucleosomes wrap and compact DNA into chromatin, limiting DNA accessibility to the cellular machineries which require DNA as a template. Histones thereby play a central role in transcription regulation, DNA repair, DNA replication and chromosomal stability. DNA accessibility is regulated via a complex set of post-translational modifications of histones, also called histone code, and nucleosome remodeling. The sequence is that of Histone H2A (HTA1) from Coccidioides immitis (strain RS) (Valley fever fungus).